The following is a 113-amino-acid chain: Nucleoid-associated protein CLH_3225 (113 aa).

The span at methionine 1–asparagine 14 shows a compositional bias: gly residues. Residues methionine 1 to aspartate 31 are disordered.

It belongs to the YbaB/EbfC family. In terms of assembly, homodimer.

It is found in the cytoplasm. The protein resides in the nucleoid. In terms of biological role, binds to DNA and alters its conformation. May be involved in regulation of gene expression, nucleoid organization and DNA protection. The sequence is that of Nucleoid-associated protein CLH_3225 from Clostridium botulinum (strain Alaska E43 / Type E3).